The sequence spans 158 residues: HVA22-like protein f (158 aa).

Helical transmembrane passes span 2–22, 41–61, and 63–83; these read GFIIAIAKRFDALVGPGVMLL, QQWLTYWIIYSLITIFELSVW, and VLAWLPFWPYLKLLFCMWLVL.

Belongs to the DP1 family.

It is found in the membrane. This Arabidopsis thaliana (Mouse-ear cress) protein is HVA22-like protein f (HVA22F).